Here is a 360-residue protein sequence, read N- to C-terminus: Peptide chain release factor 1 (360 aa).

N5-methylglutamine is present on Q235. The interval 285-305 is disordered; that stretch reads KRQEAEASERRNLLGSGDRSD.

Belongs to the prokaryotic/mitochondrial release factor family. In terms of processing, methylated by PrmC. Methylation increases the termination efficiency of RF1.

The protein resides in the cytoplasm. Peptide chain release factor 1 directs the termination of translation in response to the peptide chain termination codons UAG and UAA. This is Peptide chain release factor 1 from Proteus mirabilis (strain HI4320).